We begin with the raw amino-acid sequence, 349 residues long: ATPase GET3 (349 aa).

26 to 33 (KGGVGKTT) contributes to the ATP binding site. D57 is a catalytic residue. Positions 240 and 267 each coordinate ATP. Zn(2+) contacts are provided by C280 and C283.

Belongs to the arsA ATPase family. In terms of assembly, homodimer. Component of the Golgi to ER traffic (GET) complex, which is composed of GET1, GET2 and GET3. Within the complex, GET1 and GET2 form a heterotetramer which is stabilized by phosphatidylinositol binding and which binds to the GET3 homodimer. Interacts with the chloride channel protein GEF1.

Its subcellular location is the cytoplasm. It is found in the endoplasmic reticulum. The protein resides in the golgi apparatus. Functionally, ATPase required for the post-translational delivery of tail-anchored (TA) proteins to the endoplasmic reticulum. Recognizes and selectively binds the transmembrane domain of TA proteins in the cytosol. This complex then targets to the endoplasmic reticulum by membrane-bound receptors GET1 and GET2, where the tail-anchored protein is released for insertion. This process is regulated by ATP binding and hydrolysis. ATP binding drives the homodimer towards the closed dimer state, facilitating recognition of newly synthesized TA membrane proteins. ATP hydrolysis is required for insertion. Subsequently, the homodimer reverts towards the open dimer state, lowering its affinity for the GET1-GET2 receptor, and returning it to the cytosol to initiate a new round of targeting. Cooperates with the HDEL receptor ERD2 to mediate the ATP-dependent retrieval of resident ER proteins that contain a C-terminal H-D-E-L retention signal from the Golgi to the ER. Involved in low-level resistance to the oxyanions arsenite and arsenate, and in heat tolerance. The polypeptide is ATPase GET3 (Kluyveromyces lactis (strain ATCC 8585 / CBS 2359 / DSM 70799 / NBRC 1267 / NRRL Y-1140 / WM37) (Yeast)).